The chain runs to 653 residues: Pentatricopeptide repeat-containing protein At3g14730 (653 aa).

14 PPR repeats span residues 59–93 (NVATCIATLQRCAQRKDYVSGQQIHGFMVRKGFLD), 95–119 (SPRAGTSLVNMYAKCGLMRRAVLVF), 125–159 (DVFGYNALISGFVVNGSPLDAMETYREMRANGILP), 160–193 (DKYTFPSLLKGSDAMELSDVKKVHGLAFKLGFDS), 194–224 (DCYVGSGLVTSYSKFMSVEDAQKVFDELPDR), 226–260 (DSVLWNALVNGYSQIFRFEDALLVFSKMREEGVGV), 261–295 (SRHTITSVLSAFTVSGDIDNGRSIHGLAVKTGSGS), 296–326 (DIVVSNALIDMYGKSKWLEEANSIFEAMDER), 327–361 (DLFTWNSVLCVHDYCGDHDGTLALFERMLCSGIRP), 362–396 (DIVTLTTVLPTCGRLASLRQGREIHGYMIVSGLLN), 401–431 (NEFIHNSLMDMYVKCGDLRDARMVFDSMRVK), 432–466 (DSASWNIMINGYGVQSCGELALDMFSCMCRAGVKP), 467–497 (DEITFVGLLQACSHSGFLNEGRNFLAQMETV), and 503–537 (TSDHYACVIDMLGRADKLEEAYELAISKPICDNPV). Residues 538 to 613 (VWRSILSSCR…TPGCSWIVLK (76 aa)) form a type E motif region. Residues 614-644 (NGVHTFFTGNQTHPEFKSIHDWLSLVISHMH) form a type E(+) motif region.

It belongs to the PPR family. PCMP-E subfamily.

This is Pentatricopeptide repeat-containing protein At3g14730 (PCMP-E31) from Arabidopsis thaliana (Mouse-ear cress).